The chain runs to 252 residues: 7-cyano-7-deazaguanine synthase (252 aa).

22-32 (FSGGQDSTTCL) is an ATP binding site. Zn(2+)-binding residues include Cys-215, Cys-230, Cys-233, and Cys-236.

Belongs to the QueC family. Requires Zn(2+) as cofactor.

It catalyses the reaction 7-carboxy-7-deazaguanine + NH4(+) + ATP = 7-cyano-7-deazaguanine + ADP + phosphate + H2O + H(+). It participates in purine metabolism; 7-cyano-7-deazaguanine biosynthesis. Catalyzes the ATP-dependent conversion of 7-carboxy-7-deazaguanine (CDG) to 7-cyano-7-deazaguanine (preQ(0)). This chain is 7-cyano-7-deazaguanine synthase, found in Granulibacter bethesdensis (strain ATCC BAA-1260 / CGDNIH1).